The following is a 760-amino-acid chain: Cyclin-D-binding Myb-like transcription factor 1 (760 aa).

The segment at 1–237 (MSTVEEDSDT…TPEEIEKLKE (237 aa)) is interaction with CCND2. Residues 87-170 (VTMTATTEVA…IDILMNNIER (84 aa)) form a required for transcriptional activation region. A required for DNA-binding region spans residues 87–458 (VTMTATTEVA…DNTAISSSPM (372 aa)). The segment at 176-760 (GIKDATEIIF…KDVEDLVNCH (585 aa)) is interaction with CCND1, CCND2 and CCND3. A Myb-like 1 domain is found at 225-263 (GKYTPEEIEKLKELRIKHGNDWATIGAALGRSASSVKDR). Residues 268 to 333 (KDTCNTGKWT…KWLNYLNWKQ (66 aa)) form the HTH myb-type domain. Positions 306–329 (WAAVAERVGTRSEKQCRSKWLNYL) form a DNA-binding region, H-T-H motif. Residues 339 to 388 (WTKEDEINLILRIAELDVADENDINWDLLAEGWSSVRSPQWLRSKWWTIK) enclose the Myb-like 2 domain. 2 disordered regions span residues 414 to 435 (KNNP…NTNS) and 738 to 760 (IGSS…VNCH). Residues 459-760 (AALQIPVQIT…KDVEDLVNCH (302 aa)) are required for transcriptional activation.

It belongs to the DMTF1 family. Interacts with the D-type cyclins CCND1, CCND2 and CCND3. Interaction with D-type cyclins may modulate transcriptional activation by this protein. Phosphorylated by the cyclin-D2/CDK4, cyclin-D3/CDK4 and cyclin-D2/CDK6 complexes and to a lesser extent by the cyclin-D1/CDK4 complex. In terms of tissue distribution, expressed at relatively low levels in colonic mucosa, ovary, peripheral leukocytes, prostate and small intestine, and at higher levels in spleen, testis and thymus. Expressed in multiple regions of the brain and CNS including amygdala, caudate, corpus callosum, hippocampus, substantia nigra and subthalamic nucleus. Isoform 1 is the predominant isoform in monocytes, macrophages and neutrophils, isoform 2 is most strongly expressed in peripheral blood leukocytes and quiescent CD34 positive cells, and isoform 3 is expressed at low levels in all hematopoietic cell types. Expression is frequently reduced in non-small-cell lung carcinomas (NSCLC) due to hemizygous gene deletion, strongly suggesting that this locus is haploinsufficient for tumor suppression. Loss of this locus frequently occurs in tumors which retain wild-type CDKN2A/ARF and p53/TP53 loci. Hemizygous gene deletion has also been observed in leukemic blasts from patients with abnormalities of the long arm of chromosome 7.

It is found in the nucleus. Transcriptional activator which activates the CDKN2A/ARF locus in response to Ras-Raf signaling, thereby promoting p53/TP53-dependent growth arrest. Binds to the consensus sequence 5'-CCCG[GT]ATGT-3'. Isoform 1 may cooperate with MYB to activate transcription of the ANPEP gene. Isoform 2 may antagonize transcriptional activation by isoform 1. The polypeptide is Cyclin-D-binding Myb-like transcription factor 1 (DMTF1) (Homo sapiens (Human)).